The sequence spans 220 residues: Deoxyribose-phosphate aldolase (220 aa).

Asp89 functions as the Proton donor/acceptor in the catalytic mechanism. The active-site Schiff-base intermediate with acetaldehyde is Lys151. Lys180 acts as the Proton donor/acceptor in catalysis.

Belongs to the DeoC/FbaB aldolase family. DeoC type 1 subfamily.

It localises to the cytoplasm. The enzyme catalyses 2-deoxy-D-ribose 5-phosphate = D-glyceraldehyde 3-phosphate + acetaldehyde. It participates in carbohydrate degradation; 2-deoxy-D-ribose 1-phosphate degradation; D-glyceraldehyde 3-phosphate and acetaldehyde from 2-deoxy-alpha-D-ribose 1-phosphate: step 2/2. In terms of biological role, catalyzes a reversible aldol reaction between acetaldehyde and D-glyceraldehyde 3-phosphate to generate 2-deoxy-D-ribose 5-phosphate. The sequence is that of Deoxyribose-phosphate aldolase from Lactococcus lactis subsp. lactis (strain IL1403) (Streptococcus lactis).